The chain runs to 348 residues: NADH-ubiquinone oxidoreductase chain 2 (348 aa).

A run of 9 helical transmembrane segments spans residues 13–33, 60–80, 96–116, 124–144, 150–170, 200–220, 241–261, 278–298, and 325–345; these read VITGTLITMLSSHWFLAWAGL, FLAQSTASMILMMAIISNNLL, PLAMTIALTMKLGMAPFHFWV, PLTSGLLLLTWQKLAPISIMY, INTHILLILSTLSIAVGSWGG, TITTLYLITYITLTTTMFLTL, LMPLMTSTLLSLGGLPPLTGF, IIPTIMITMTLLNLYFYMRLI, and LFIPALITISTLLLPISPLIL.

The protein belongs to the complex I subunit 2 family. In terms of assembly, core subunit of respiratory chain NADH dehydrogenase (Complex I) which is composed of 45 different subunits. Interacts with TMEM242.

The protein resides in the mitochondrion inner membrane. The enzyme catalyses a ubiquinone + NADH + 5 H(+)(in) = a ubiquinol + NAD(+) + 4 H(+)(out). Its function is as follows. Core subunit of the mitochondrial membrane respiratory chain NADH dehydrogenase (Complex I) which catalyzes electron transfer from NADH through the respiratory chain, using ubiquinone as an electron acceptor. Essential for the catalytic activity and assembly of complex I. In Papio hamadryas (Hamadryas baboon), this protein is NADH-ubiquinone oxidoreductase chain 2.